The sequence spans 550 residues: CCR4-NOT transcription complex subunit 6-like-B (550 aa).

The interval 1–148 (MPKEKYDPPD…LYQEPDGMRK (148 aa)) is required for interaction with cnot1, cnot3 and cnot7. 4 LRR repeats span residues 52–73 (HLTV…IAKL), 75–96 (NLVY…LGNV), 98–120 (SLRE…GRLF), and 121–143 (RLQT…YQEP). Positions 153–550 (MLDNLSVHPE…INGVHLPSRR (398 aa)) are nuclease domain. Glutamate 235 is a Mg(2+) binding site. 4 residues coordinate substrate: glutamate 235, glutamate 271, histidine 355, and proline 360. Residue aspartate 405 coordinates Mg(2+). Aspartate 405 acts as the Proton donor/acceptor in catalysis. Residues asparagine 407, asparagine 474, and phenylalanine 479 each coordinate substrate.

It belongs to the CCR4/nocturin family. Component of the CCR4-NOT complex. The cofactor is Mg(2+).

It is found in the cytoplasm. The protein resides in the nucleus. The catalysed reaction is Exonucleolytic cleavage of poly(A) to 5'-AMP.. Poly(A) nuclease with 3'-5' RNase activity. Catalytic component of the CCR4-NOT complex which is one of the major cellular mRNA deadenylases and is linked to various cellular processes including bulk mRNA degradation, miRNA-mediated repression, translational repression during translational initiation and general transcription regulation. Additional complex functions may be a consequence of its influence on mRNA expression. The sequence is that of CCR4-NOT transcription complex subunit 6-like-B (cnot6l-b) from Xenopus laevis (African clawed frog).